Consider the following 443-residue polypeptide: MTGESLDGSLHALTIELDALRRENANLKQQLKEKDGACGELPMSLEEFQRYGRQMIVGETGGLSGQVKLRSARVLIVGAGGLGCPALQYLAGAGIGHLGIVDNDVVEESNLHRQPLHDTSKVGLLKCDSAKEALSRLNPYCSIKTYPVRLSYANAFEIFPSWDLILDCTDSPMSRYLISDVAVNLGKTVVSGSGLGTEGQLSIYNFENKGPCYRCFYPIPPRPGSVVSCQSGGVLGPCIGVLGIMMAVEALKILFGIYTLENFKPFLMQYSGFPYQTLRMFKMRNRKQGCLCCGDNPTITKSTIESGHIKYEAFCGAINYDVLSKDERLSASEFEANYWSQKERGFVCLDVRPRLHYEISHLPGTYNMTVKELDEMEGSIEELQKHIPVITPDLDIVVLCRYGNDSRLATRILKDKFKLRNVRDVKGGYFAYIDEINPSLPKY.

ATP is bound by residues G81, D102, 109–113, K126, and 170–171; these read SNLHR and DS. Residues C212 and C215 each coordinate Zn(2+). C229 (glycyl thioester intermediate; for adenylyltransferase activity) is an active-site residue. 2 residues coordinate Zn(2+): C290 and C293. Residues 342–441 form the Rhodanese domain; it reads KERGFVCLDV…YIDEINPSLP (100 aa). C400 (cysteine persulfide intermediate; for sulfurtransferase activity) is an active-site residue.

In the N-terminal section; belongs to the HesA/MoeB/ThiF family. UBA4 subfamily. Zn(2+) is required as a cofactor.

It is found in the cytoplasm. Its subcellular location is the cytosol. The protein operates within tRNA modification; 5-methoxycarbonylmethyl-2-thiouridine-tRNA biosynthesis. Plays a central role in 2-thiolation of mcm(5)S(2)U at tRNA wobble positions of cytosolic tRNA(Lys), tRNA(Glu) and tRNA(Gln). Acts by mediating the C-terminal thiocarboxylation of sulfur carrier URM1. Its N-terminus first activates URM1 as acyl-adenylate (-COAMP), then the persulfide sulfur on the catalytic cysteine is transferred to URM1 to form thiocarboxylation (-COSH) of its C-terminus. The reaction probably involves hydrogen sulfide that is generated from the persulfide intermediate and that acts as a nucleophile towards URM1. Subsequently, a transient disulfide bond is formed. Does not use thiosulfate as sulfur donor; NFS1 probably acting as a sulfur donor for thiocarboxylation reactions. Prior mcm(5) tRNA modification by the elongator complex is required for 2-thiolation. May also be involved in protein urmylation. The polypeptide is Adenylyltransferase and sulfurtransferase UBA4 (Eremothecium gossypii (strain ATCC 10895 / CBS 109.51 / FGSC 9923 / NRRL Y-1056) (Yeast)).